The primary structure comprises 294 residues: Signal peptidase I (294 aa).

The disordered stretch occupies residues 1-59 (MTETTDSPSERQPGPAEPELSSRDPDIAGQVFDAAPFDAAPDADSEGDSKAAKTDEPRP). Residues 1–66 (MTETTDSPSE…PRPAKRSTLR (66 aa)) lie on the Cytoplasmic side of the membrane. A compositionally biased stretch (basic and acidic residues) spans 47–59 (GDSKAAKTDEPRP). A helical transmembrane segment spans residues 67 to 87 (EFAVLAVIAVVLYYVMLTFVA). Over 88-294 (RPYLIPSESM…VRSVNPQQGR (207 aa)) the chain is Extracellular. Active-site residues include Ser96 and Lys174.

This sequence belongs to the peptidase S26 family.

Its subcellular location is the cell membrane. The catalysed reaction is Cleavage of hydrophobic, N-terminal signal or leader sequences from secreted and periplasmic proteins.. The polypeptide is Signal peptidase I (lepB) (Mycobacterium tuberculosis (strain CDC 1551 / Oshkosh)).